Reading from the N-terminus, the 156-residue chain is 3-hydroxyacyl-[acyl-carrier-protein] dehydratase FabZ (156 aa).

H57 is a catalytic residue.

This sequence belongs to the thioester dehydratase family. FabZ subfamily.

The protein resides in the cytoplasm. The catalysed reaction is a (3R)-hydroxyacyl-[ACP] = a (2E)-enoyl-[ACP] + H2O. In terms of biological role, involved in unsaturated fatty acids biosynthesis. Catalyzes the dehydration of short chain beta-hydroxyacyl-ACPs and long chain saturated and unsaturated beta-hydroxyacyl-ACPs. The protein is 3-hydroxyacyl-[acyl-carrier-protein] dehydratase FabZ of Anaeromyxobacter dehalogenans (strain 2CP-1 / ATCC BAA-258).